A 505-amino-acid polypeptide reads, in one-letter code: Activin receptor type-1B (505 aa).

Positions 1–23 (MAESAGASSFFPLVVLLLAGSGG) are cleaved as a signal peptide. Residues 24–126 (SGPRGVQALL…EHPSMWGPVE (103 aa)) are Extracellular-facing. Residue Asn43 is glycosylated (N-linked (GlcNAc...) asparagine). The helical transmembrane segment at 127–149 (LVGIIAGPVFLLFLIIIIVFLVI) threads the bilayer. Residues 150-505 (NYHQRVYHNR…QLSVQEDVKI (356 aa)) lie on the Cytoplasmic side of the membrane. One can recognise a GS domain in the interval 177-206 (KTLQDLVYDLSTSGSGSGLPLFVQRTVART). The region spanning 207 to 497 (IVLQEIIGKG…LRIKKTLSQL (291 aa)) is the Protein kinase domain. ATP is bound by residues 213-221 (IGKGRFGEV) and Lys234. Asp335 serves as the catalytic Proton acceptor. Tyr380 bears the Phosphotyrosine mark.

Belongs to the protein kinase superfamily. TKL Ser/Thr protein kinase family. TGFB receptor subfamily. In terms of assembly, forms an activin receptor complex with activin receptor type-2 (ACVR2A or ACVR2B). Part of a complex consisting of MAGI2/ARIP1, ACVR2A, ACVR1B and SMAD3. Interacts with SMAD2 and SMAD3. Interacts with SMAD7. Interacts with FKBP1A. Interacts with IGSF1. Interacts with CRIPTO. Interacts with TDP2. Interacts with TSC22D1/TSC-22. Mg(2+) serves as cofactor. It depends on Mn(2+) as a cofactor. In terms of processing, autophosphorylated. Phosphorylated by activin receptor type-2 (ACVR2A or ACVR2B) in response to activin-binding at serine and threonine residues in the GS domain. Phosphorylation of ACVR1B by activin receptor type-2 regulates association with SMAD7. Ubiquitinated. Level of ubiquitination is regulated by the SMAD7-SMURF1 complex. Post-translationally, ubiquitinated. Expressed in many tissues, most strongly in kidney, pancreas, brain, lung, and liver.

The protein localises to the cell membrane. The catalysed reaction is L-threonyl-[receptor-protein] + ATP = O-phospho-L-threonyl-[receptor-protein] + ADP + H(+). It carries out the reaction L-seryl-[receptor-protein] + ATP = O-phospho-L-seryl-[receptor-protein] + ADP + H(+). Activin receptor type-2 (ACVR2A or ACVR2B) activates the type-1 receptor through phosphorylation of its regulatory GS domain. Transmembrane serine/threonine kinase activin type-1 receptor forming an activin receptor complex with activin receptor type-2 (ACVR2A or ACVR2B). Transduces the activin signal from the cell surface to the cytoplasm and is thus regulating a many physiological and pathological processes including neuronal differentiation and neuronal survival, hair follicle development and cycling, FSH production by the pituitary gland, wound healing, extracellular matrix production, immunosuppression and carcinogenesis. Activin is also thought to have a paracrine or autocrine role in follicular development in the ovary. Within the receptor complex, type-2 receptors (ACVR2A and/or ACVR2B) act as a primary activin receptors whereas the type-1 receptors like ACVR1B act as downstream transducers of activin signals. Activin binds to type-2 receptor at the plasma membrane and activates its serine-threonine kinase. The activated receptor type-2 then phosphorylates and activates the type-1 receptor such as ACVR1B. Once activated, the type-1 receptor binds and phosphorylates the SMAD proteins SMAD2 and SMAD3, on serine residues of the C-terminal tail. Soon after their association with the activin receptor and subsequent phosphorylation, SMAD2 and SMAD3 are released into the cytoplasm where they interact with the common partner SMAD4. This SMAD complex translocates into the nucleus where it mediates activin-induced transcription. Inhibitory SMAD7, which is recruited to ACVR1B through FKBP1A, can prevent the association of SMAD2 and SMAD3 with the activin receptor complex, thereby blocking the activin signal. Activin signal transduction is also antagonized by the binding to the receptor of inhibin-B via the IGSF1 inhibin coreceptor. ACVR1B also phosphorylates TDP2. The chain is Activin receptor type-1B (ACVR1B) from Homo sapiens (Human).